Here is a 385-residue protein sequence, read N- to C-terminus: Glucans biosynthesis protein C (385 aa).

10 helical membrane passes run 17 to 39, 54 to 76, 88 to 110, 136 to 158, 179 to 198, 213 to 235, 242 to 261, 276 to 295, 308 to 330, and 334 to 356; these read AWLM…TWHV, FIHS…MLFL, VERV…FIML, LISH…WIFK, LSVI…RTIF, IVMQ…IFPH, TPSR…YLLN, SVIT…SFGH, FVNA…GAYI, and ITSN…IILY.

This sequence belongs to the acyltransferase 3 family. OpgC subfamily.

It is found in the cell membrane. It functions in the pathway glycan metabolism; osmoregulated periplasmic glucan (OPG) biosynthesis. In terms of biological role, necessary for the succinyl substitution of periplasmic glucans. Could catalyze the transfer of succinyl residues from the cytoplasmic side of the membrane to the nascent glucan backbones on the periplasmic side of the membrane. This chain is Glucans biosynthesis protein C, found in Escherichia coli O157:H7.